Here is a 174-residue protein sequence, read N- to C-terminus: CASP-like protein 4D2 (174 aa).

Residues 1 to 14 (MAPPPPSPPAVSLK) are Cytoplasmic-facing. The chain crosses the membrane as a helical span at residues 15–35 (VLLLLLRVLTGVFLVIALIIL). Topologically, residues 36–60 (STNSVTIVSQGSALKFHFKDVYAYR) are extracellular. Residues 61 to 81 (YMLSAAVIGLVYAVIQLFFTI) form a helical membrane-spanning segment. Residues 82–97 (SEFATGVKNPFNYQLD) are Cytoplasmic-facing. A helical membrane pass occupies residues 98–118 (FYGDKLISYLVATGSAAGFGV). Residues 119 to 150 (TKDLKDTFLALVALDSTDPVDKFFSKGYASAS) are Extracellular-facing. Residues 151 to 171 (LLLFAFICLAVLSVFSSFAMA) traverse the membrane as a helical segment. Residues 172-174 (KRN) lie on the Cytoplasmic side of the membrane.

This sequence belongs to the Casparian strip membrane proteins (CASP) family. As to quaternary structure, homodimer and heterodimers.

The protein localises to the cell membrane. In Arabidopsis thaliana (Mouse-ear cress), this protein is CASP-like protein 4D2.